The following is a 402-amino-acid chain: Argininosuccinate synthase (402 aa).

An ATP-binding site is contributed by 8 to 16; sequence AYSGGLDTS. L-citrulline is bound by residues tyrosine 86 and serine 91. Glycine 116 contacts ATP. L-aspartate is bound by residues threonine 118, asparagine 122, and aspartate 123. Asparagine 122 serves as a coordination point for L-citrulline. Residues arginine 126, serine 175, serine 184, glutamate 260, and tyrosine 272 each contribute to the L-citrulline site.

Belongs to the argininosuccinate synthase family. Type 1 subfamily. As to quaternary structure, homotetramer.

The protein resides in the cytoplasm. The enzyme catalyses L-citrulline + L-aspartate + ATP = 2-(N(omega)-L-arginino)succinate + AMP + diphosphate + H(+). It participates in amino-acid biosynthesis; L-arginine biosynthesis; L-arginine from L-ornithine and carbamoyl phosphate: step 2/3. The polypeptide is Argininosuccinate synthase (Clostridium novyi (strain NT)).